The following is a 224-amino-acid chain: Putative homeobox protein R749 (224 aa).

The interval 139–162 (KTKTIKKSTSEKKTSPKKKTTSQQ) is disordered. Residues 161–220 (QQIKRVRLSDEERNILESQYSKNNFPSPEIRDELAKKIGKTPRQVQIWFQNKRCKDRKNL) constitute a DNA-binding region (homeobox).

The protein localises to the host nucleus. The polypeptide is Putative homeobox protein R749 (Acanthamoeba polyphaga mimivirus (APMV)).